Here is a 142-residue protein sequence, read N- to C-terminus: Large ribosomal subunit protein uL16 (142 aa).

Belongs to the universal ribosomal protein uL16 family. In terms of assembly, part of the 50S ribosomal subunit.

Binds 23S rRNA and is also seen to make contacts with the A and possibly P site tRNAs. The protein is Large ribosomal subunit protein uL16 of Gemmatimonas aurantiaca (strain DSM 14586 / JCM 11422 / NBRC 100505 / T-27).